Here is a 176-residue protein sequence, read N- to C-terminus: Mitochondrial inner membrane protein Mpv17 (176 aa).

4 helical membrane passes run 18-38 (VQVL…QQLV), 53-73 (TMAS…YRVL), 94-114 (GGFA…LNGL), and 131-151 (LITN…LVPL).

Belongs to the peroxisomal membrane protein PXMP2/4 family.

It localises to the mitochondrion inner membrane. Non-selective channel that modulates the membrane potential under normal conditions and oxidative stress, and is involved in mitochondrial homeostasis. Involved in mitochondrial deoxynucleoside triphosphates (dNTP) pool homeostasis and mitochondrial DNA (mtDNA) maintenance. May be involved in the regulation of reactive oxygen species metabolism and the control of oxidative phosphorylation. This Bos taurus (Bovine) protein is Mitochondrial inner membrane protein Mpv17.